The following is a 273-amino-acid chain: MSDMHSLLIAAILGVVEGLTEFLPVSSTGHMIIVGHLLGFEGDTAKTFEVVIQLGSILAVVVMFWRRLFGLIGIHFGRPLQHEGESKGRLTLIHILLGMIPAVVLGLLFHDTIKSLFNPINVMYALVVGGLLLIAAECLKPKEPRAPGLDDMTYRQAFMIGCFQCLALWPGFSRSGATISGGMLMGVSRYAASEFSFLLAVPMMMGATALDLYKSWGFLTSGDIPMFAVGFITAFVVALIAIKTFLQLIKRISFIPFAIYRFIVAAAVYVVFF.

7 helical membrane passes run 6 to 26, 45 to 65, 90 to 110, 116 to 136, 190 to 210, 222 to 242, and 252 to 272; these read SLLI…LPVS, AKTF…VMFW, LTLI…LLFH, LFNP…LIAA, YAAS…ATAL, GDIP…LIAI, and ISFI…YVVF.

It belongs to the UppP family.

Its subcellular location is the cell inner membrane. The enzyme catalyses di-trans,octa-cis-undecaprenyl diphosphate + H2O = di-trans,octa-cis-undecaprenyl phosphate + phosphate + H(+). Its function is as follows. Catalyzes the dephosphorylation of undecaprenyl diphosphate (UPP). Confers resistance to bacitracin. The polypeptide is Undecaprenyl-diphosphatase (Escherichia coli O157:H7).